A 673-amino-acid polypeptide reads, in one-letter code: Armadillo repeat-containing protein 8 (673 aa).

Ala2 carries the post-translational modification N-acetylalanine. 14 ARM repeats span residues 51–92 (NKQK…SLAM), 95–134 (ENNVKSLLDCHIIPALLQGLLSPDLKFIEACLRCLRTIFT), 138–176 (TPEELLYTDATVIPHLMALLSRSRYTQEYICQIFSHCCK), 178–217 (PDHQTILFNHGAVQNIAHLLTSLSYKVRMQALKCFSVLAF), 224–265 (MTLV…YMCR), 269–309 (IRTD…YLIE), 313–352 (ELQRIASITDHLIAMLADYFKYPSSVSAITDIKRLDHDLK), 374–413 (DIRKKIIETENMMDRIVTGLSESSVKVRLAAVRCLHSLSR), 416–455 (QQLRTSFQDHAVWKPLMKVLQNAPDEILVVASSMLCNLLL), 458–497 (SPSKEPILESGAVELLCGLTQSENPALRVNGIWALMNMAF), 501–540 (QKIKADILRSLSTEQLFRLLSDSDLNVLMKTLGLLRNLLS), 543–585 (PHID…NIAD), 588–627 (TAKDLIMTNDDILQKIKYYMGHSHVKLQLAAMFCISNLIW), and 634–673 (QERQDKLRDMGIVDILHKLSQSPDSNLCDKAKMALQQYLA). At Ser337 the chain carries Phosphoserine. Ser512 carries the post-translational modification Phosphoserine.

In terms of assembly, identified in the CTLH complex that contains GID4, RANBP9 and/or RANBP10, MKLN1, MAEA, RMND5A (or alternatively its paralog RMND5B), GID8, ARMC8, WDR26 and YPEL5. Within this complex, MAEA, RMND5A (or alternatively its paralog RMND5B), GID8, WDR26, and RANBP9 and/or RANBP10 form the catalytic core, while GID4, MKLN1, ARMC8 and YPEL5 have ancillary roles.

The protein resides in the nucleus. It localises to the cytoplasm. Component of the CTLH E3 ubiquitin-protein ligase complex that selectively accepts ubiquitin from UBE2H and mediates ubiquitination and subsequent proteasomal degradation of the transcription factor HBP1. This is Armadillo repeat-containing protein 8 (ARMC8) from Homo sapiens (Human).